Consider the following 274-residue polypeptide: Beta-lysine N(6)-acetyltransferase (274 aa).

The region spanning 123–274 (FHLKIANETD…DMNFWYKLSE (152 aa)) is the N-acetyltransferase domain.

This sequence belongs to the acetyltransferase family.

The catalysed reaction is (3S)-3,6-diaminohexanoate + acetyl-CoA = (3S)-6-acetamido-3-aminohexanoate + CoA + H(+). Functionally, catalyzes the acetylation of beta-lysine to N6-acetyl-beta-lysine, a compatible solute produced by methanogenic archaea that helps cells to cope with salt stress. The protein is Beta-lysine N(6)-acetyltransferase of Methanococcus maripaludis (strain DSM 14266 / JCM 13030 / NBRC 101832 / S2 / LL).